Reading from the N-terminus, the 390-residue chain is Magnesium-protoporphyrin IX monomethyl ester [oxidative] cyclase (390 aa).

The tract at residues 1–20 (MSQSTIESTNKKEINKGKAP) is disordered.

Belongs to the AcsF family. Fe cation is required as a cofactor.

It catalyses the reaction Mg-protoporphyrin IX 13-monomethyl ester + 3 NADPH + 3 O2 + 2 H(+) = 3,8-divinyl protochlorophyllide a + 3 NADP(+) + 5 H2O. It functions in the pathway porphyrin-containing compound metabolism; chlorophyll biosynthesis (light-independent). Its function is as follows. Catalyzes the formation of the isocyclic ring in chlorophyll biosynthesis. Mediates the cyclase reaction, which results in the formation of divinylprotochlorophyllide (Pchlide) characteristic of all chlorophylls from magnesium-protoporphyrin IX 13-monomethyl ester (MgPMME). The chain is Magnesium-protoporphyrin IX monomethyl ester [oxidative] cyclase from Prochlorococcus marinus (strain MIT 9301).